A 93-amino-acid polypeptide reads, in one-letter code: Small ribosomal subunit protein uS15 (93 aa).

Belongs to the universal ribosomal protein uS15 family. In terms of assembly, part of the 30S ribosomal subunit. Forms a bridge to the 50S subunit in the 70S ribosome, contacting the 23S rRNA.

Its function is as follows. One of the primary rRNA binding proteins, it binds directly to 16S rRNA where it helps nucleate assembly of the platform of the 30S subunit by binding and bridging several RNA helices of the 16S rRNA. Functionally, forms an intersubunit bridge (bridge B4) with the 23S rRNA of the 50S subunit in the ribosome. This is Small ribosomal subunit protein uS15 from Anaplasma marginale (strain Florida).